Reading from the N-terminus, the 391-residue chain is Sulfate adenylyltransferase (391 aa).

Belongs to the sulfate adenylyltransferase family.

The catalysed reaction is sulfate + ATP + H(+) = adenosine 5'-phosphosulfate + diphosphate. Its pathway is sulfur metabolism; hydrogen sulfide biosynthesis; sulfite from sulfate: step 1/3. This chain is Sulfate adenylyltransferase, found in Lactiplantibacillus plantarum (strain ATCC BAA-793 / NCIMB 8826 / WCFS1) (Lactobacillus plantarum).